Reading from the N-terminus, the 245-residue chain is tRNA1(Val) (adenine(37)-N6)-methyltransferase (245 aa).

This sequence belongs to the methyltransferase superfamily. tRNA (adenine-N(6)-)-methyltransferase family.

The protein localises to the cytoplasm. The enzyme catalyses adenosine(37) in tRNA1(Val) + S-adenosyl-L-methionine = N(6)-methyladenosine(37) in tRNA1(Val) + S-adenosyl-L-homocysteine + H(+). Functionally, specifically methylates the adenine in position 37 of tRNA(1)(Val) (anticodon cmo5UAC). This chain is tRNA1(Val) (adenine(37)-N6)-methyltransferase, found in Salmonella paratyphi C (strain RKS4594).